The primary structure comprises 23 residues: Endochitinase B (23 aa).

This sequence belongs to the glycosyl hydrolase 19 family. Chitinase class I subfamily.

It catalyses the reaction Random endo-hydrolysis of N-acetyl-beta-D-glucosaminide (1-&gt;4)-beta-linkages in chitin and chitodextrins.. Defense against chitin-containing fungal pathogens. The protein is Endochitinase B of Pisum sativum (Garden pea).